Consider the following 378-residue polypeptide: Ferredoxin--NADP reductase, embryo isozyme, chloroplastic (378 aa).

A chloroplast-targeting transit peptide spans 1–62 (MASALGAQAS…SRHMNKIFSM (62 aa)). Residues 93–221 (KEPYTATIVS…TGPSGKIMLL (129 aa)) form the FAD-binding FR-type domain. FAD-binding positions include 153–156 (RLYS), 174–176 (CVR), Tyr-180, 195–197 (ICS), and Thr-237. Ser-156 and Arg-176 together coordinate NADP(+). NADP(+)-binding positions include Thr-237, 269–270 (VA), 299–300 (SR), Lys-309, 337–338 (GL), and Glu-376.

The protein belongs to the ferredoxin--NADP reductase type 1 family. FAD serves as cofactor.

The protein resides in the plastid. It is found in the chloroplast. It carries out the reaction 2 reduced [2Fe-2S]-[ferredoxin] + NADP(+) + H(+) = 2 oxidized [2Fe-2S]-[ferredoxin] + NADPH. The protein operates within energy metabolism; photosynthesis. May play a key role in regulating the relative amounts of cyclic and non-cyclic electron flow to meet the demands of the plant for ATP and reducing power. Is involved in nitrate assimilation. The sequence is that of Ferredoxin--NADP reductase, embryo isozyme, chloroplastic from Oryza sativa subsp. japonica (Rice).